A 156-amino-acid chain; its full sequence is Transcriptional repressor NrdR (156 aa).

Residues 3–34 (CPKCNSTHSRVVDSRHADEANAIRRRRECENC) fold into a zinc finger. Residues 49–139 (LIVVKKDGTR…VYKEFKDVDQ (91 aa)) enclose the ATP-cone domain.

It belongs to the NrdR family. The cofactor is Zn(2+).

Functionally, negatively regulates transcription of bacterial ribonucleotide reductase nrd genes and operons by binding to NrdR-boxes. The chain is Transcriptional repressor NrdR from Staphylococcus epidermidis (strain ATCC 35984 / DSM 28319 / BCRC 17069 / CCUG 31568 / BM 3577 / RP62A).